Consider the following 711-residue polypeptide: Double-stranded RNA-specific editase 1 (711 aa).

The tract at residues 1-79 (MDIEDEENMS…RRKTPGPVLP (79 aa)) is disordered. Residues 63–73 (SKYRLKKRRKT) are compositionally biased toward basic residues. The DRBM 1 domain occupies 78–144 (LPKNALMQLN…AEKALRSFVQ (67 aa)). Interaction with substrate RNA stretches follow at residues 83–88 (LMQLNE) and 104–105 (VH). The residue at position 149 (Ser149) is a Phosphoserine. Residues 176 to 220 (LFNGFETPDKSEPPFYVGSNGDDSFSSSGDVSLSASPVPASLTQP) are disordered. Low complexity predominate over residues 192–213 (VGSNGDDSFSSSGDVSLSASPV). The region spanning 231-298 (PSGKNPVMIL…AQSALATVFN (68 aa)) is the DRBM 2 domain. Interaction with substrate RNA regions lie at residues 237-242 (VMILNE) and His259. The A to I editase domain occupies 370–707 (SVSTGTKCIN…VEKPTEQDQF (338 aa)). A Zn(2+)-binding site is contributed by His394. Glu396 (proton donor) is an active-site residue. The 1D-myo-inositol hexakisphosphate site is built by Arg400 and Arg401. The Zn(2+) site is built by Cys451 and Cys526. Lys529, Arg532, Lys639, Lys672, Lys682, and Lys700 together coordinate 1D-myo-inositol hexakisphosphate.

As to quaternary structure, homodimer. Homodimerization is essential for its catalytic activity. Can form heterodimers with isoform 5 of ADAR/ADAR1. It depends on 1D-myo-inositol hexakisphosphate as a cofactor. As to expression, brain and peripheral tissues.

The protein localises to the nucleus. The protein resides in the nucleolus. It carries out the reaction adenosine in double-stranded RNA + H2O + H(+) = inosine in double-stranded RNA + NH4(+). Its function is as follows. Catalyzes the hydrolytic deamination of adenosine to inosine in double-stranded RNA (dsRNA) referred to as A-to-I RNA editing. This may affect gene expression and function in a number of ways that include mRNA translation by changing codons and hence the amino acid sequence of proteins; pre-mRNA splicing by altering splice site recognition sequences; RNA stability by changing sequences involved in nuclease recognition; genetic stability in the case of RNA virus genomes by changing sequences during viral RNA replication; and RNA structure-dependent activities such as microRNA production or targeting or protein-RNA interactions. Can edit both viral and cellular RNAs and can edit RNAs at multiple sites (hyper-editing) or at specific sites (site-specific editing). Its cellular RNA substrates include: bladder cancer-associated protein (BLCAP), neurotransmitter receptors for glutamate (GRIA2 and GRIK2) and serotonin (HTR2C), GABA receptor (GABRA3) and potassium voltage-gated channel (KCNA1). Site-specific RNA editing of transcripts encoding these proteins results in amino acid substitutions which consequently alter their functional activities. Edits GRIA2 at both the Q/R and R/G sites efficiently but converts the adenosine in hotspot1 much less efficiently. Can inhibit cell proliferation and migration and can stimulate exocytosis. The polypeptide is Double-stranded RNA-specific editase 1 (Adarb1) (Rattus norvegicus (Rat)).